A 299-amino-acid chain; its full sequence is Nucleotide-binding protein glr4163 (299 aa).

An ATP-binding site is contributed by 18–25; it reads SPAGAGRT.

Belongs to the RapZ-like family.

Displays ATPase and GTPase activities. This Gloeobacter violaceus (strain ATCC 29082 / PCC 7421) protein is Nucleotide-binding protein glr4163.